A 31-amino-acid polypeptide reads, in one-letter code: Photosystem II reaction center protein M (31 aa).

The chain crosses the membrane as a helical span at residues 5–25 (ILAFIATALLILVPTAFLLII).

It belongs to the PsbM family. PSII is composed of 1 copy each of membrane proteins PsbA, PsbB, PsbC, PsbD, PsbE, PsbF, PsbH, PsbI, PsbJ, PsbK, PsbL, PsbM, PsbT, PsbX, PsbY, PsbZ, Psb30/Ycf12, at least 3 peripheral proteins of the oxygen-evolving complex and a large number of cofactors. It forms dimeric complexes.

It is found in the plastid membrane. In terms of biological role, one of the components of the core complex of photosystem II (PSII). PSII is a light-driven water:plastoquinone oxidoreductase that uses light energy to abstract electrons from H(2)O, generating O(2) and a proton gradient subsequently used for ATP formation. It consists of a core antenna complex that captures photons, and an electron transfer chain that converts photonic excitation into a charge separation. This subunit is found at the monomer-monomer interface. This Cuscuta exaltata (Tall dodder) protein is Photosystem II reaction center protein M.